The following is a 340-amino-acid chain: Glycerol-3-phosphate dehydrogenase [NAD(P)+] (340 aa).

Residues Ser-11, Trp-12, Arg-33, and Lys-106 each coordinate NADPH. Residues Lys-106, Gly-137, and Ser-139 each coordinate sn-glycerol 3-phosphate. Ala-141 serves as a coordination point for NADPH. Sn-glycerol 3-phosphate is bound by residues Lys-192, Asp-245, Ser-255, Arg-256, and Asn-257. The active-site Proton acceptor is the Lys-192. Residue Arg-256 participates in NADPH binding. The NADPH site is built by Val-280 and Glu-282.

It belongs to the NAD-dependent glycerol-3-phosphate dehydrogenase family.

It is found in the cytoplasm. The enzyme catalyses sn-glycerol 3-phosphate + NAD(+) = dihydroxyacetone phosphate + NADH + H(+). The catalysed reaction is sn-glycerol 3-phosphate + NADP(+) = dihydroxyacetone phosphate + NADPH + H(+). Its pathway is membrane lipid metabolism; glycerophospholipid metabolism. In terms of biological role, catalyzes the reduction of the glycolytic intermediate dihydroxyacetone phosphate (DHAP) to sn-glycerol 3-phosphate (G3P), the key precursor for phospholipid synthesis. This chain is Glycerol-3-phosphate dehydrogenase [NAD(P)+], found in Bacillus anthracis (strain A0248).